A 186-amino-acid chain; its full sequence is Peptide deformylase (186 aa).

Positions 113 and 156 each coordinate Fe cation. Glutamate 157 is an active-site residue. Histidine 160 is a Fe cation binding site.

This sequence belongs to the polypeptide deformylase family. Fe(2+) is required as a cofactor.

It catalyses the reaction N-terminal N-formyl-L-methionyl-[peptide] + H2O = N-terminal L-methionyl-[peptide] + formate. Its function is as follows. Removes the formyl group from the N-terminal Met of newly synthesized proteins. Requires at least a dipeptide for an efficient rate of reaction. N-terminal L-methionine is a prerequisite for activity but the enzyme has broad specificity at other positions. The sequence is that of Peptide deformylase from Levilactobacillus brevis (strain ATCC 367 / BCRC 12310 / CIP 105137 / JCM 1170 / LMG 11437 / NCIMB 947 / NCTC 947) (Lactobacillus brevis).